A 296-amino-acid chain; its full sequence is NAD kinase (296 aa).

D72 (proton acceptor) is an active-site residue. Residues 72–73 (DG), 146–147 (ND), R157, K174, D176, 187–192 (TAYALS), and Q247 contribute to the NAD(+) site.

It belongs to the NAD kinase family. The cofactor is a divalent metal cation.

The protein localises to the cytoplasm. It carries out the reaction NAD(+) + ATP = ADP + NADP(+) + H(+). In terms of biological role, involved in the regulation of the intracellular balance of NAD and NADP, and is a key enzyme in the biosynthesis of NADP. Catalyzes specifically the phosphorylation on 2'-hydroxyl of the adenosine moiety of NAD to yield NADP. This chain is NAD kinase, found in Pseudomonas putida (strain GB-1).